The primary structure comprises 317 residues: Acetyl-coenzyme A carboxylase carboxyl transferase subunit alpha (317 aa).

In terms of domain architecture, CoA carboxyltransferase C-terminal spans 33-294 (NLDDEIARLQ…KQRLLDDLKE (262 aa)).

It belongs to the AccA family. Acetyl-CoA carboxylase is a heterohexamer composed of biotin carboxyl carrier protein (AccB), biotin carboxylase (AccC) and two subunits each of ACCase subunit alpha (AccA) and ACCase subunit beta (AccD).

It is found in the cytoplasm. It catalyses the reaction N(6)-carboxybiotinyl-L-lysyl-[protein] + acetyl-CoA = N(6)-biotinyl-L-lysyl-[protein] + malonyl-CoA. It participates in lipid metabolism; malonyl-CoA biosynthesis; malonyl-CoA from acetyl-CoA: step 1/1. Its function is as follows. Component of the acetyl coenzyme A carboxylase (ACC) complex. First, biotin carboxylase catalyzes the carboxylation of biotin on its carrier protein (BCCP) and then the CO(2) group is transferred by the carboxyltransferase to acetyl-CoA to form malonyl-CoA. The polypeptide is Acetyl-coenzyme A carboxylase carboxyl transferase subunit alpha (Pasteurella multocida (strain Pm70)).